The following is a 199-amino-acid chain: Imidazole glycerol phosphate synthase subunit HisH (199 aa).

Residues 3–199 form the Glutamine amidotransferase type-1 domain; it reads NITIIDTGCA…LKNFVEKVPF (197 aa). C78 functions as the Nucleophile in the catalytic mechanism. Residues H178 and E180 contribute to the active site.

As to quaternary structure, heterodimer of HisH and HisF.

The protein resides in the cytoplasm. The enzyme catalyses 5-[(5-phospho-1-deoxy-D-ribulos-1-ylimino)methylamino]-1-(5-phospho-beta-D-ribosyl)imidazole-4-carboxamide + L-glutamine = D-erythro-1-(imidazol-4-yl)glycerol 3-phosphate + 5-amino-1-(5-phospho-beta-D-ribosyl)imidazole-4-carboxamide + L-glutamate + H(+). It catalyses the reaction L-glutamine + H2O = L-glutamate + NH4(+). It functions in the pathway amino-acid biosynthesis; L-histidine biosynthesis; L-histidine from 5-phospho-alpha-D-ribose 1-diphosphate: step 5/9. In terms of biological role, IGPS catalyzes the conversion of PRFAR and glutamine to IGP, AICAR and glutamate. The HisH subunit catalyzes the hydrolysis of glutamine to glutamate and ammonia as part of the synthesis of IGP and AICAR. The resulting ammonia molecule is channeled to the active site of HisF. The polypeptide is Imidazole glycerol phosphate synthase subunit HisH (Haemophilus influenzae (strain 86-028NP)).